A 667-amino-acid polypeptide reads, in one-letter code: Probable export ATP-binding/permease protein MacB (667 aa).

The region spanning 22-260 (LRLAGVSRRF…PVEEVQPAAE (239 aa)) is the ABC transporter domain. Position 58–65 (58–65 (GASGSGKS)) interacts with ATP. The next 4 helical transmembrane spans lie at 292–312 (LLTMLGIIIGITSVVSISAIG), 540–560 (LTLLLSLIAVISLVVGGIGVM), 601–621 (IGGVIGIGLSYGIGYLFALFV), and 630–650 (LGSIVTAFVCSTLIGIVFGFV).

It belongs to the ABC transporter superfamily. Macrolide exporter (TC 3.A.1.122) family. As to quaternary structure, probably part of a tripartite efflux system, which is composed of an inner membrane transporter, a periplasmic membrane fusion protein, and an outer membrane component.

The protein resides in the cell inner membrane. Its function is as follows. Probably part of a tripartite efflux system. This Pseudomonas entomophila (strain L48) protein is Probable export ATP-binding/permease protein MacB.